We begin with the raw amino-acid sequence, 125 residues long: Holo-[acyl-carrier-protein] synthase (125 aa).

Mg(2+)-binding residues include Asp7 and Glu56.

The protein belongs to the P-Pant transferase superfamily. AcpS family. It depends on Mg(2+) as a cofactor.

The protein resides in the cytoplasm. It catalyses the reaction apo-[ACP] + CoA = holo-[ACP] + adenosine 3',5'-bisphosphate + H(+). In terms of biological role, transfers the 4'-phosphopantetheine moiety from coenzyme A to a Ser of acyl-carrier-protein. The protein is Holo-[acyl-carrier-protein] synthase of Chlamydia muridarum (strain MoPn / Nigg).